The sequence spans 230 residues: Ribosomal RNA small subunit methyltransferase I (230 aa).

The protein belongs to the methyltransferase superfamily. RsmI family.

It localises to the cytoplasm. It catalyses the reaction cytidine(1402) in 16S rRNA + S-adenosyl-L-methionine = 2'-O-methylcytidine(1402) in 16S rRNA + S-adenosyl-L-homocysteine + H(+). Functionally, catalyzes the 2'-O-methylation of the ribose of cytidine 1402 (C1402) in 16S rRNA. The polypeptide is Ribosomal RNA small subunit methyltransferase I (Hydrogenobaculum sp. (strain Y04AAS1)).